The primary structure comprises 624 residues: DNA damage response protein Mdb1 (624 aa).

3 disordered regions span residues 177-237, 249-386, and 591-624; these read ERIP…DDES, GETK…KNKH, and IGKR…EQRT. 2 stretches are compositionally biased toward basic and acidic residues: residues 200-217 and 225-235; these read DEKL…HSSD and EDQKQLNKTDD. The span at 250–263 shows a compositional bias: polar residues; that stretch reads ETKSPSSVSQSLSG. Phosphoserine occurs at positions 253 and 283. Low complexity predominate over residues 294-305; that stretch reads NISDSSIKNNSI. 2 stretches are compositionally biased toward basic and acidic residues: residues 306–316 and 325–352; these read HSDEVNPEVRP and EESK…REAE. Residues 356–386 show a composition bias toward polar residues; it reads ISTNYSFPSSSLEDQPDKNVQSSAVENKNKH. The 93-residue stretch at 376 to 468 folds into the BRCT domain; it reads QSSAVENKNK…KVLDFRSYKY (93 aa).

As to quaternary structure, homodimer. Interacts (via BRCT domain) with hta1 peptide containing the S/T-Q motif in vitro; this interaction requires phosphorylation of the hta1 peptide at the S/T-Q motif.

It is found in the nucleus. Its subcellular location is the chromosome. The protein resides in the cytoplasm. The protein localises to the cytoskeleton. It localises to the spindle. Involved in DNA damage response (DDR) mediated through its interaction with phosphorylated H2A proteins hta1 and hta2 which mark the discrete foci of DNA damage. This is DNA damage response protein Mdb1 from Schizosaccharomyces pombe (strain 972 / ATCC 24843) (Fission yeast).